The following is a 340-amino-acid chain: Flap endonuclease 1 (340 aa).

Positions 1-98 are N-domain; sequence MGVPIGEIIP…KELEKRREAR (98 aa). Residues D27, D80, E152, E154, D173, D175, and D236 each coordinate Mg(2+). The interval 116 to 258 is I-domain; sequence EARKYAQRAT…KALEIVRHSK (143 aa). The interval 330–338 is interaction with PCNA; the sequence is KQSTLESWF.

Belongs to the XPG/RAD2 endonuclease family. FEN1 subfamily. Interacts with PCNA. PCNA stimulates the nuclease activity without altering cleavage specificity. The cofactor is Mg(2+).

Structure-specific nuclease with 5'-flap endonuclease and 5'-3' exonuclease activities involved in DNA replication and repair. During DNA replication, cleaves the 5'-overhanging flap structure that is generated by displacement synthesis when DNA polymerase encounters the 5'-end of a downstream Okazaki fragment. Binds the unpaired 3'-DNA end and kinks the DNA to facilitate 5' cleavage specificity. Cleaves one nucleotide into the double-stranded DNA from the junction in flap DNA, leaving a nick for ligation. Also involved in the base excision repair (BER) pathway. Acts as a genome stabilization factor that prevents flaps from equilibrating into structures that lead to duplications and deletions. Also possesses 5'-3' exonuclease activity on nicked or gapped double-stranded DNA. The protein is Flap endonuclease 1 of Pyrococcus furiosus (strain ATCC 43587 / DSM 3638 / JCM 8422 / Vc1).